A 172-amino-acid chain; its full sequence is Cytochrome c oxidase subunit 4 isoform 2, mitochondrial (172 aa).

The transit peptide at 1–34 (MFSRAARSLVMRTGLRTRGTGTHSPGDAAGSQRR) directs the protein to the mitochondrion. A compositionally biased stretch (low complexity) spans 13–22 (TGLRTRGTGT). The disordered stretch occupies residues 13 to 32 (TGLRTRGTGTHSPGDAAGSQ). Over 35–101 (MTPYVDCYAQ…TFAEMNHRSN (67 aa)) the chain is Mitochondrial matrix. A helical membrane pass occupies residues 102–127 (EWKTVMGCVFFFIGFTALVIWWQRVY). At 128–172 (VFPKKVVTLTEERKAQQLQRLLDMKSNPIQGLAAHWDYEKKEWKK) the chain is on the mitochondrial intermembrane side.

Belongs to the cytochrome c oxidase IV family. In terms of assembly, component of the cytochrome c oxidase (complex IV, CIV), a multisubunit enzyme composed of 14 subunits. The complex is composed of a catalytic core of 3 subunits MT-CO1, MT-CO2 and MT-CO3, encoded in the mitochondrial DNA, and 11 supernumerary subunits COX4I, COX5A, COX5B, COX6A, COX6B, COX6C, COX7A, COX7B, COX7C, COX8 and NDUFA4, which are encoded in the nuclear genome. The complex exists as a monomer or a dimer and forms supercomplexes (SCs) in the inner mitochondrial membrane with NADH-ubiquinone oxidoreductase (complex I, CI) and ubiquinol-cytochrome c oxidoreductase (cytochrome b-c1 complex, complex III, CIII), resulting in different assemblies (supercomplex SCI(1)III(2)IV(1) and megacomplex MCI(2)III(2)IV(2)).

Its subcellular location is the mitochondrion inner membrane. It functions in the pathway energy metabolism; oxidative phosphorylation. In terms of biological role, component of the cytochrome c oxidase, the last enzyme in the mitochondrial electron transport chain which drives oxidative phosphorylation. The respiratory chain contains 3 multisubunit complexes succinate dehydrogenase (complex II, CII), ubiquinol-cytochrome c oxidoreductase (cytochrome b-c1 complex, complex III, CIII) and cytochrome c oxidase (complex IV, CIV), that cooperate to transfer electrons derived from NADH and succinate to molecular oxygen, creating an electrochemical gradient over the inner membrane that drives transmembrane transport and the ATP synthase. Cytochrome c oxidase is the component of the respiratory chain that catalyzes the reduction of oxygen to water. Electrons originating from reduced cytochrome c in the intermembrane space (IMS) are transferred via the dinuclear copper A center (CU(A)) of subunit 2 and heme A of subunit 1 to the active site in subunit 1, a binuclear center (BNC) formed by heme A3 and copper B (CU(B)). The BNC reduces molecular oxygen to 2 water molecules using 4 electrons from cytochrome c in the IMS and 4 protons from the mitochondrial matrix. This chain is Cytochrome c oxidase subunit 4 isoform 2, mitochondrial (Cox4i2), found in Mus musculus (Mouse).